The primary structure comprises 343 residues: Protein RecA (343 aa).

Residue 66-73 participates in ATP binding; it reads GPESSGKT.

It belongs to the RecA family.

Its subcellular location is the cytoplasm. Can catalyze the hydrolysis of ATP in the presence of single-stranded DNA, the ATP-dependent uptake of single-stranded DNA by duplex DNA, and the ATP-dependent hybridization of homologous single-stranded DNAs. It interacts with LexA causing its activation and leading to its autocatalytic cleavage. The sequence is that of Protein RecA from Rickettsia conorii (strain ATCC VR-613 / Malish 7).